The sequence spans 403 residues: Chorismate synthase (403 aa).

NADP(+)-binding residues include Arg40 and Arg46. FMN is bound by residues 140–142 (RSS), 261–262 (QA), Gly305, 320–324 (KPIST), and Arg346.

The protein belongs to the chorismate synthase family. Homotetramer. It depends on FMNH2 as a cofactor.

The catalysed reaction is 5-O-(1-carboxyvinyl)-3-phosphoshikimate = chorismate + phosphate. The protein operates within metabolic intermediate biosynthesis; chorismate biosynthesis; chorismate from D-erythrose 4-phosphate and phosphoenolpyruvate: step 7/7. Catalyzes the anti-1,4-elimination of the C-3 phosphate and the C-6 proR hydrogen from 5-enolpyruvylshikimate-3-phosphate (EPSP) to yield chorismate, which is the branch point compound that serves as the starting substrate for the three terminal pathways of aromatic amino acid biosynthesis. This reaction introduces a second double bond into the aromatic ring system. The protein is Chorismate synthase of Corynebacterium diphtheriae (strain ATCC 700971 / NCTC 13129 / Biotype gravis).